A 294-amino-acid polypeptide reads, in one-letter code: Nucleotide-binding protein Dtur_1129 (294 aa).

ATP is bound at residue 10–17 (GLSGAGKS). 61–64 (DIRT) is a binding site for GTP.

Belongs to the RapZ-like family.

Its function is as follows. Displays ATPase and GTPase activities. The polypeptide is Nucleotide-binding protein Dtur_1129 (Dictyoglomus turgidum (strain DSM 6724 / Z-1310)).